The following is a 1040-amino-acid chain: DIS3-like exonuclease 1 (1040 aa).

A CSD1 domain is found at 232–310; sequence AGIKSGRYKQ…KGRTGALCEN (79 aa). The CSD2 domain maps to 360–426; sequence VLVMPWDYRI…AEIATILVEN (67 aa). The RNB domain occupies 459-808; sequence RLDLRETHLV…VHRLLLAAVN (350 aa).

This sequence belongs to the RNR ribonuclease family. As to quaternary structure, component of the RNA exosome complex. Mg(2+) is required as a cofactor.

Its subcellular location is the cytoplasm. The enzyme catalyses Exonucleolytic cleavage in the 3'- to 5'-direction to yield nucleoside 5'-phosphates.. Its function is as follows. Catalytic component of the RNA exosome complex which has 3'-&gt;5' exoribonuclease activity and participates in a multitude of cellular RNA processing and degradation events. The protein is DIS3-like exonuclease 1 (dis3l) of Xenopus laevis (African clawed frog).